The following is an 82-amino-acid chain: UPF0335 protein pRhico085 (82 aa).

It belongs to the UPF0335 family.

The polypeptide is UPF0335 protein pRhico085 (Azospirillum brasilense).